The primary structure comprises 168 residues: Photosystem I assembly protein Ycf3 (168 aa).

3 TPR repeats span residues alanine 35–proline 68, serine 72–leucine 105, and glycine 120–asparagine 153.

Belongs to the Ycf3 family.

It localises to the plastid membrane. Essential for the assembly of the photosystem I (PSI) complex. May act as a chaperone-like factor to guide the assembly of the PSI subunits. This Cuscuta gronovii (Common dodder) protein is Photosystem I assembly protein Ycf3.